Consider the following 85-residue polypeptide: U4-theraphotoxin-Hhn1a (85 aa).

The signal sequence occupies residues 1–22 (MKVTLISILTCAAVLVLHTTAA). A propeptide spanning residues 23-48 (EELEAESQLMEVGMPDTELAAVDEER) is cleaved from the precursor. 3 disulfides stabilise this stretch: Cys-52-Cys-66, Cys-56-Cys-77, and Cys-71-Cys-82.

Belongs to the neurotoxin 12 (Hwtx-2) family. 02 (Hwtx-2) subfamily. Monomer. As to expression, expressed by the venom gland.

It is found in the secreted. Neurotoxin active on both insects and mammals. The sequence is that of U4-theraphotoxin-Hhn1a from Cyriopagopus hainanus (Chinese bird spider).